The chain runs to 1578 residues: Pentafunctional AROM polypeptide (1578 aa).

Residues 1 to 384 are 3-dehydroquinate synthase; that stretch reads MAEPTKIKIL…YEPKASVVPN (384 aa). NAD(+)-binding positions include 44–46, 81–84, 114–116, and Asp-119; these read DTN, EVSK, and GGV. Position 130 (Arg-130) interacts with 7-phospho-2-dehydro-3-deoxy-D-arabino-heptonate. Residue 139 to 140 participates in NAD(+) binding; sequence TT. Residues Asp-146 and Lys-152 each coordinate 7-phospho-2-dehydro-3-deoxy-D-arabino-heptonate. Position 161 (Lys-161) interacts with NAD(+). Position 162 (Asn-162) interacts with 7-phospho-2-dehydro-3-deoxy-D-arabino-heptonate. NAD(+) contacts are provided by residues 179–182 and Asn-190; that span reads FLET. Glu-194 contacts Zn(2+). 7-phospho-2-dehydro-3-deoxy-D-arabino-heptonate contacts are provided by residues 194–197 and Lys-250; that span reads EVIK. Glu-260 (proton acceptor; for 3-dehydroquinate synthase activity) is an active-site residue. 7-phospho-2-dehydro-3-deoxy-D-arabino-heptonate-binding positions include 264-268 and His-271; that span reads RNLLN. Position 271 (His-271) interacts with Zn(2+). His-275 (proton acceptor; for 3-dehydroquinate synthase activity) is an active-site residue. His-287 and Lys-356 together coordinate 7-phospho-2-dehydro-3-deoxy-D-arabino-heptonate. His-287 is a Zn(2+) binding site. Residues 397–842 are EPSP synthase; it reads VHPGVEPASN…WDTLRQKFSA (446 aa). Cys-824 acts as the For EPSP synthase activity in catalysis. The shikimate kinase stretch occupies residues 864–1055; the sequence is TASVFIIGMR…KRKKHSFFVS (192 aa). 871 to 878 is an ATP binding site; the sequence is GMRGAGKT. The 3-dehydroquinase stretch occupies residues 1056–1276; sequence LTLPDLRTAG…AAPGQLSATE (221 aa). His-1179 (proton acceptor; for 3-dehydroquinate dehydratase activity) is an active-site residue. The active-site Schiff-base intermediate with substrate; for 3-dehydroquinate dehydratase activity is Lys-1207. A shikimate dehydrogenase region spans residues 1289–1578; the sequence is QKKFAVFGTP…EDARAAVLSS (290 aa).

It in the N-terminal section; belongs to the sugar phosphate cyclases superfamily. Dehydroquinate synthase family. This sequence in the 2nd section; belongs to the EPSP synthase family. The protein in the 3rd section; belongs to the shikimate kinase family. In the 4th section; belongs to the type-I 3-dehydroquinase family. It in the C-terminal section; belongs to the shikimate dehydrogenase family. Homodimer. Zn(2+) serves as cofactor.

The protein resides in the cytoplasm. The enzyme catalyses 7-phospho-2-dehydro-3-deoxy-D-arabino-heptonate = 3-dehydroquinate + phosphate. It catalyses the reaction 3-dehydroquinate = 3-dehydroshikimate + H2O. It carries out the reaction shikimate + NADP(+) = 3-dehydroshikimate + NADPH + H(+). The catalysed reaction is shikimate + ATP = 3-phosphoshikimate + ADP + H(+). The enzyme catalyses 3-phosphoshikimate + phosphoenolpyruvate = 5-O-(1-carboxyvinyl)-3-phosphoshikimate + phosphate. The protein operates within metabolic intermediate biosynthesis; chorismate biosynthesis; chorismate from D-erythrose 4-phosphate and phosphoenolpyruvate: step 2/7. It participates in metabolic intermediate biosynthesis; chorismate biosynthesis; chorismate from D-erythrose 4-phosphate and phosphoenolpyruvate: step 3/7. Its pathway is metabolic intermediate biosynthesis; chorismate biosynthesis; chorismate from D-erythrose 4-phosphate and phosphoenolpyruvate: step 4/7. It functions in the pathway metabolic intermediate biosynthesis; chorismate biosynthesis; chorismate from D-erythrose 4-phosphate and phosphoenolpyruvate: step 5/7. The protein operates within metabolic intermediate biosynthesis; chorismate biosynthesis; chorismate from D-erythrose 4-phosphate and phosphoenolpyruvate: step 6/7. Its function is as follows. The AROM polypeptide catalyzes 5 consecutive enzymatic reactions in prechorismate polyaromatic amino acid biosynthesis. This chain is Pentafunctional AROM polypeptide, found in Aspergillus flavus (strain ATCC 200026 / FGSC A1120 / IAM 13836 / NRRL 3357 / JCM 12722 / SRRC 167).